A 59-amino-acid chain; its full sequence is Large ribosomal subunit protein uL30 (59 aa).

Belongs to the universal ribosomal protein uL30 family. Part of the 50S ribosomal subunit.

The sequence is that of Large ribosomal subunit protein uL30 from Erwinia tasmaniensis (strain DSM 17950 / CFBP 7177 / CIP 109463 / NCPPB 4357 / Et1/99).